The primary structure comprises 366 residues: Chorismate synthase (366 aa).

NADP(+) is bound by residues R48 and R54. Residues 125 to 127 (RSS), 238 to 239 (NA), G278, 293 to 297 (KPTSS), and R319 each bind FMN.

The protein belongs to the chorismate synthase family. Homotetramer. Requires FMNH2 as cofactor.

It catalyses the reaction 5-O-(1-carboxyvinyl)-3-phosphoshikimate = chorismate + phosphate. It functions in the pathway metabolic intermediate biosynthesis; chorismate biosynthesis; chorismate from D-erythrose 4-phosphate and phosphoenolpyruvate: step 7/7. Functionally, catalyzes the anti-1,4-elimination of the C-3 phosphate and the C-6 proR hydrogen from 5-enolpyruvylshikimate-3-phosphate (EPSP) to yield chorismate, which is the branch point compound that serves as the starting substrate for the three terminal pathways of aromatic amino acid biosynthesis. This reaction introduces a second double bond into the aromatic ring system. The sequence is that of Chorismate synthase from Methylococcus capsulatus (strain ATCC 33009 / NCIMB 11132 / Bath).